Consider the following 211-residue polypeptide: Peptidyl-tRNA hydrolase (211 aa).

Position 17 (tyrosine 17) interacts with tRNA. The Proton acceptor role is filled by histidine 22. 3 residues coordinate tRNA: phenylalanine 79, asparagine 81, and asparagine 127.

The protein belongs to the PTH family. Monomer.

Its subcellular location is the cytoplasm. It carries out the reaction an N-acyl-L-alpha-aminoacyl-tRNA + H2O = an N-acyl-L-amino acid + a tRNA + H(+). In terms of biological role, hydrolyzes ribosome-free peptidyl-tRNAs (with 1 or more amino acids incorporated), which drop off the ribosome during protein synthesis, or as a result of ribosome stalling. Its function is as follows. Catalyzes the release of premature peptidyl moieties from peptidyl-tRNA molecules trapped in stalled 50S ribosomal subunits, and thus maintains levels of free tRNAs and 50S ribosomes. The chain is Peptidyl-tRNA hydrolase from Solidesulfovibrio magneticus (strain ATCC 700980 / DSM 13731 / RS-1) (Desulfovibrio magneticus).